The primary structure comprises 366 residues: MPQPQQHTADYSSAAYEAQLQQKLIRLNQDFASFNLPEISVFRSPEKHFRMRTEFRIWHERGTAMYVMFSQTDKRPYPIREFPIGSERINQLMPELMALVNRHECLRHKLFQVEFLTSLSNQALITLVYHKPLDEEWISAATDLRKQLNVEIIGRSRKQKILLERDHIIECLKVNGREYRYQQVEGSFTQPNARVCEQMLSWAQEQTRHTGGDLLELYCGNGNFTLPLAQNFDRVLATEISKTSVDSALYNSRLNQVENLQIARMSSEEFTQAMDGVREFNRLKHISLNDYRFSTIFVDPPRAGLDPATCHLAQRFDNIVYISCNPETLKDNLQTLTQTHQICTFAAFDQFPYTHHLECGVLLQRR.

S-adenosyl-L-methionine is bound by residues glutamine 190, tyrosine 218, asparagine 223, glutamate 239, and aspartate 299. Cysteine 324 functions as the Nucleophile in the catalytic mechanism. Glutamate 358 (proton acceptor) is an active-site residue.

It belongs to the class I-like SAM-binding methyltransferase superfamily. RNA M5U methyltransferase family. TrmA subfamily.

The enzyme catalyses uridine(54) in tRNA + S-adenosyl-L-methionine = 5-methyluridine(54) in tRNA + S-adenosyl-L-homocysteine + H(+). The catalysed reaction is uridine(341) in tmRNA + S-adenosyl-L-methionine = 5-methyluridine(341) in tmRNA + S-adenosyl-L-homocysteine + H(+). Functionally, dual-specificity methyltransferase that catalyzes the formation of 5-methyluridine at position 54 (m5U54) in all tRNAs, and that of position 341 (m5U341) in tmRNA (transfer-mRNA). This Cellvibrio japonicus (strain Ueda107) (Pseudomonas fluorescens subsp. cellulosa) protein is tRNA/tmRNA (uracil-C(5))-methyltransferase.